Consider the following 273-residue polypeptide: MSIVKEAHNVKVLGSGEKTIVLGHGFGTDQSVWKHLVPYLIDEYRVVLYDNMGAGPTNPDYFDFHRYSSLEGYAYDLLSILEELEIKCCIYLGHSSSAMTGVVASIFRPDLFSKLILVSASPRFLNTDDYYGGFELEEIDQLCQAMESNYKAWIAGFAPLVVGGDMDSVAVQEFSRTLFNMRPDIALSVFRTVFTFDLRHFLSQVTVPCHIIQSSLDVAVPVAVSQYLHQNLGGMSIVEIISTEGADCFGSYRRGSEMETKRGSDDAVTIALR.

Ser-95 serves as the catalytic Nucleophile. The active site involves Asp-217.

Belongs to the AB hydrolase superfamily. As to expression, expressed in stigma.

It localises to the nucleus. The protein resides in the cytoplasm. Functionally, may be involved in plant olfaction during volatile communication. The sequence is that of Karrikin insensitive 2 receptor B from Petunia hybrida (Petunia).